Consider the following 318-residue polypeptide: Bis(5'-nucleosyl)-tetraphosphatase, symmetrical (318 aa).

Residues 269–318 form a disordered region; the sequence is PGREVTGPAPVARAPRRPRERLGRQRSRGNRGNAGNTAVPAKPQVDTPQD. The span at 282-297 shows a compositional bias: basic residues; that stretch reads APRRPRERLGRQRSRG.

It belongs to the Ap4A hydrolase family.

It catalyses the reaction P(1),P(4)-bis(5'-adenosyl) tetraphosphate + H2O = 2 ADP + 2 H(+). Its function is as follows. Hydrolyzes diadenosine 5',5'''-P1,P4-tetraphosphate to yield ADP. The chain is Bis(5'-nucleosyl)-tetraphosphatase, symmetrical from Xanthomonas oryzae pv. oryzae (strain KACC10331 / KXO85).